The chain runs to 235 residues: Ribitol-5-phosphate cytidylyltransferase (235 aa).

CTP is bound by residues Leu7–Gly10, Gly82–Ser88, and Ser113.

It belongs to the IspD/TarI cytidylyltransferase family. TarI subfamily.

It catalyses the reaction D-ribitol 5-phosphate + CTP + H(+) = CDP-L-ribitol + diphosphate. Its pathway is cell wall biogenesis; poly(ribitol phosphate) teichoic acid biosynthesis. In terms of biological role, catalyzes the transfer of the cytidylyl group of CTP to D-ribitol 5-phosphate. The sequence is that of Ribitol-5-phosphate cytidylyltransferase from Streptococcus pneumoniae serotype 2 (strain D39 / NCTC 7466).